Consider the following 962-residue polypeptide: Glutamate receptor 1 (962 aa).

Positions 1–25 are cleaved as a signal peptide; the sequence is MFSSFSFLNMFGVLFTVFNLTVVQP. The Extracellular portion of the chain corresponds to 26–591; it reads YPSHIIIKSF…SVFSFMQPLS (566 aa). N-linked (GlcNAc...) asparagine glycans are attached at residues asparagine 190, asparagine 220, asparagine 275, asparagine 333, asparagine 441, and asparagine 482. The helical transmembrane segment at 592–612 threads the bilayer; the sequence is TEIWMYIIFAYIGVSVVIFLV. The Cytoplasmic segment spans residues 613–668; the sequence is SRFSPYEWRVEETSRGGFTISNDFSVYNCLWFTLAAFMQQGTDILPRSISGRIASS. The chain crosses the membrane as a helical span at residues 669 to 689; it reads AWWFFTMIIVSSYTANLAAFL. Residues 690 to 855 lie on the Extracellular side of the membrane; sequence TLEKMQAPIE…GSSASLNLSK (166 aa). Asparagine 852 carries an N-linked (GlcNAc...) asparagine glycan. Residues 856-876 form a helical membrane-spanning segment; the sequence is VAGIFYILMGGMVISMLAALG. Residues 877 to 962 lie on the Cytoplasmic side of the membrane; that stretch reads EFLYRSRIEA…PANTLYNTAV (86 aa).

The protein belongs to the glutamate-gated ion channel (TC 1.A.10.1) family. In terms of assembly, interacts with sol-1. Interacts with cni-1; the interaction negatively regulates export of glr-1 from the endoplasmic reticulum to synapses. Interacts with usp-46; the interaction results in deubiquitination of glr-1. Post-translationally, ubiquitinated. Deubiquitinated by usp-46 which prevents its degradation. Glycosylated. Command interneurons of the locomotory control circuit (AIB, AVA, AVB, AVD, AVE and PVC) and motor neurons (RMD, RIM, SMD, AVG, PVQ and URY).

It localises to the postsynaptic cell membrane. The protein localises to the endoplasmic reticulum. It is found in the synapse. Its subcellular location is the cell membrane. The protein resides in the recycling endosome. It localises to the cell projection. The protein localises to the dendrite. It is found in the perikaryon. Non-NMDA (N-methyl-D-aspartate) ionotropic glutamate receptor. L-glutamate acts as an excitatory neurotransmitter at many synapses in the central nervous system. The postsynaptic actions of glutamate are mediated by a variety of receptors that are named according to their selective agonists. May contribute to a sensory discrimination between mechanical and chemical stimuli. Plays a role in controlling movement in response to environmental cues such as food availability and mechanosensory stimulation such as the nose touch response. In AIB interneurons, promotes omega turns, a movement that frequently follows backwards locomotion or 'reversals' in response to environmental cues while possibly playing an inhibitory role in alternative neurons to inhibit omega turns. This chain is Glutamate receptor 1, found in Caenorhabditis elegans.